The chain runs to 451 residues: Phosphoglucosamine mutase (451 aa).

The active-site Phosphoserine intermediate is Ser101. Mg(2+)-binding residues include Ser101, Asp240, Asp242, and Asp244. Ser101 carries the post-translational modification Phosphoserine.

Belongs to the phosphohexose mutase family. Mg(2+) serves as cofactor. In terms of processing, activated by phosphorylation.

It carries out the reaction alpha-D-glucosamine 1-phosphate = D-glucosamine 6-phosphate. Its function is as follows. Catalyzes the conversion of glucosamine-6-phosphate to glucosamine-1-phosphate. This chain is Phosphoglucosamine mutase, found in Streptococcus pyogenes serotype M12 (strain MGAS2096).